Consider the following 203-residue polypeptide: Urease accessory protein UreE (203 aa).

Residues 170 to 203 (EHHGHSHSHSHSHSHDHDHQHGPSCSHGHHHGHR) are disordered.

The protein belongs to the UreE family.

It localises to the cytoplasm. Its function is as follows. Involved in urease metallocenter assembly. Binds nickel. Probably functions as a nickel donor during metallocenter assembly. The protein is Urease accessory protein UreE of Burkholderia mallei (strain SAVP1).